The following is a 265-amino-acid chain: Tryptophan synthase alpha chain (265 aa).

Catalysis depends on proton acceptor residues Glu-48 and Asp-59.

This sequence belongs to the TrpA family. In terms of assembly, tetramer of two alpha and two beta chains.

It catalyses the reaction (1S,2R)-1-C-(indol-3-yl)glycerol 3-phosphate + L-serine = D-glyceraldehyde 3-phosphate + L-tryptophan + H2O. It participates in amino-acid biosynthesis; L-tryptophan biosynthesis; L-tryptophan from chorismate: step 5/5. Functionally, the alpha subunit is responsible for the aldol cleavage of indoleglycerol phosphate to indole and glyceraldehyde 3-phosphate. This chain is Tryptophan synthase alpha chain, found in Pelagibacter ubique (strain HTCC1062).